Consider the following 990-residue polypeptide: Insulin-degrading enzyme (990 aa).

A Zn(2+)-binding site is contributed by His81. The active-site Proton acceptor is Glu84. Zn(2+)-binding residues include His85 and Glu162.

It belongs to the peptidase M16 family. It depends on Zn(2+) as a cofactor.

It carries out the reaction Degradation of insulin, glucagon and other polypeptides. No action on proteins.. Functionally, can cleave insulin and TGF-alpha. The protein is Insulin-degrading enzyme (Ide) of Drosophila melanogaster (Fruit fly).